A 441-amino-acid chain; its full sequence is Actin-related protein 4 (441 aa).

A disordered region spans residues 48-73 (VDVDSTKTNSNSEDSKTESEKEKSKR). Over residues 60–70 (EDSKTESEKEK) the composition is skewed to basic and acidic residues.

This sequence belongs to the actin family. ARP4 subfamily. As to quaternary structure, component of the SWR1 chromatin-remodeling complex and of the NuA4 histone acetyltransferase complex. Interacts with the SWI/SNF complex. Interacts with EAF1A and EAF1B. As to expression, mostly expressed in flowers, and, to a lower extent, in roots, seedlings, leaves and siliques (at protein level).

It is found in the nucleus. Its subcellular location is the cytoplasm. Its function is as follows. Involved in several developmental processes including organization of plant organs, flowering time, anther development, flower senescence and fertility, probably by regulating the chromatin structure. The chain is Actin-related protein 4 from Arabidopsis thaliana (Mouse-ear cress).